A 188-amino-acid chain; its full sequence is Myc target protein 1 (188 aa).

A helical transmembrane segment spans residues 24-44 (FTVSVAIGLAIGGFLWALFVF). A Bipartite nuclear localization signal motif is present at residues 47–65 (RRRRASAPISQWSPTRRPR). Phosphoserine is present on residues Ser-87, Ser-90, Ser-93, and Ser-101.

Belongs to the MYCT1 family. In terms of tissue distribution, highly expressed in lung, heart, and skeletal muscle. Expressed in brain, eye, liver, kidney, smooth muscle, pancreas, thyroid, thymus, submaxillary gland, spleen, testis, ovary, prostate, epididymis, and uterus. Deregulated expression promotes apoptosis in response to growth factor deprivation. Overexpression in synergy with CCNB1 may promote genomic instability.

The protein resides in the nucleus membrane. In terms of biological role, may regulate certain MYC target genes, MYC seems to be a direct upstream transcriptional activator. Does not seem to significantly affect growth cell capacity. Overexpression seems to mediate many of the known phenotypic features associated with MYC, including promotion of apoptosis, alteration of morphology, enhancement of anchorage-independent growth, tumorigenic conversion, promotion of genomic instability and inhibition of hematopoietic differentiation. This is Myc target protein 1 (Myct1) from Mus musculus (Mouse).